The following is a 140-amino-acid chain: Actin-depolymerizing factor 10 (140 aa).

Ser-6 is subject to Phosphoserine. The region spanning 7–139 is the ADF-H domain; that stretch reads GMHVSDECKL…SLDIIKGRVN (133 aa).

This sequence belongs to the actin-binding proteins ADF family.

It is found in the cytoplasm. It localises to the cytoskeleton. Its function is as follows. Actin-depolymerizing protein. Severs actin filaments (F-actin) and binds to actin monomers. This is Actin-depolymerizing factor 10 (ADF10) from Arabidopsis thaliana (Mouse-ear cress).